Consider the following 974-residue polypeptide: MAQFYYKRNVNAPYRDRIPLRIVRAESELSPSEKAYLNAVEKGDYASVKKSLEEAEIYFKININCIDPLGRTALLIAIENENLELIELLLSFNVYVGDALLHAIRKEVVGAVELLLNHKKPSGEKQVPPILLDKQFSEFTPDITPIILAAHTNNYEIIKLLVQKGVSVPRPHEVRCNCVECVSSSDVDSLRHSRSRLNIYKALASPSLIALSSEDPFLTAFQLSWELQELSKVENEFKSEYEELSRQCKQFAKDLLDQTRSSRELEIILNYRDDNSLIEEQSGNDLARLKLAIKYRQKEFVAQPNCQQLLASRWYDEFPGWRRRHWAVKMVTCFIIGLLFPVFSVCYLIAPKSPLGLFIRKPFIKFICHTASYLTFLFLLLLASQHIDRSDLNRQGPPPTIVEWMILPWVLGFIWGEIKQMWDGGLQDYIHDWWNLMDFVMNSLYLATISLKIVAFVKYSALNPRESWDMWHPTLVAEALFAIANIFSSLRLISLFTANSHLGPLQISLGRMLLDILKFLFIYCLVLLAFANGLNQLYFYYEETKGLSCKGIRCEKQNNAFSTLFETLQSLFWSIFGLINLYVTNVKAQHEFTEFVGATMFGTYNVISLVVLLNMLIAMMNNSYQLIADHADIEWKFARTKLWMSYFEEGGTLPTPFNVIPSPKSLWYLVKWIWTHLCKKKMRRKPESFGTIGRRAADNLRRHHQYQEVMRNLVKRYVAAMIREAKTEEGLTEENVKELKQDISSFRFEVLGLLRGSKLSTIQSANAASSADSDEKSQSEGNGKDKRKNLSLFDLTTLIHPRSAAIASERHNLSNGSALVVQEPPREKQRKVNFVADIKNFGLFHRRSKQNAAEQNANQIFSVSEEITRQQAAGALERNIELESKGLASRGDRSIPGLNEQCVLVDHRERNTDTLGLQVGKRVCSTFKSEKVVVEDTVPIIPKEKHAHEEDSSIDYDLSPTDTAAHEDYVTTRL.

At 1–324 the chain is on the cytoplasmic side; sequence MAQFYYKRNV…YDEFPGWRRR (324 aa). ANK repeat units lie at residues 29 to 60, 71 to 93, 96 to 118, and 141 to 165; these read LSPS…IYFK, RTAL…LSFN, VGDA…LLNH, and PDIT…VQKG. The interval 87 to 172 is multimerization domain; sequence ELLLSFNVYV…QKGVSVPRPH (86 aa). His-172, Cys-176, Cys-178, and Cys-181 together coordinate Zn(2+). Residues 223–260 adopt a coiled-coil conformation; that stretch reads LSWELQELSKVENEFKSEYEELSRQCKQFAKDLLDQTR. The interval 254–304 is multimerization domain; sequence DLLDQTRSSRELEIILNYRDDNSLIEEQSGNDLARLKLAIKYRQKEFVAQP. An intramembrane region (discontinuously helical) is located at residues 325–359; the sequence is HWAVKMVTCFIIGLLFPVFSVCYLIAPKSPLGLFI. The Cytoplasmic portion of the chain corresponds to 360–362; the sequence is RKP. The chain crosses the membrane as a helical span at residues 363-383; it reads FIKFICHTASYLTFLFLLLLA. Residues 384 to 403 lie on the Extracellular side of the membrane; it reads SQHIDRSDLNRQGPPPTIVE. Residues 404–418 form a helical membrane-spanning segment; sequence WMILPWVLGFIWGEI. Positions 417, 420, 435, and 438 each coordinate Ca(2+). At 419 to 432 the chain is on the cytoplasmic side; sequence KQMWDGGLQDYIHD. The chain crosses the membrane as a helical span at residues 433-453; the sequence is WWNLMDFVMNSLYLATISLKI. The Extracellular portion of the chain corresponds to 454–475; sequence VAFVKYSALNPRESWDMWHPTL. The helical transmembrane segment at 476–498 threads the bilayer; that stretch reads VAEALFAIANIFSSLRLISLFTA. Over 499–511 the chain is Cytoplasmic; that stretch reads NSHLGPLQISLGR. The chain crosses the membrane as a helical span at residues 512 to 534; the sequence is MLLDILKFLFIYCLVLLAFANGL. At 535-599 the chain is on the extracellular side; it reads NQLYFYYEET…HEFTEFVGAT (65 aa). An intrachain disulfide couples Cys-549 to Cys-554. The helical transmembrane segment at 600 to 620 threads the bilayer; the sequence is MFGTYNVISLVVLLNMLIAMM. The tract at residues 615 to 974 is interaction with ITPR1, ITPR2 and ITPR3; that stretch reads MLIAMMNNSY…AHEDYVTTRL (360 aa). Over 621-974 the chain is Cytoplasmic; sequence NNSYQLIADH…AHEDYVTTRL (354 aa). Residues 765 to 787 are disordered; the sequence is ANAASSADSDEKSQSEGNGKDKR. A compositionally biased stretch (basic and acidic residues) spans 773 to 784; it reads SDEKSQSEGNGK. A phosphotyrosine; by FYN mark is found at Tyr-956 and Tyr-969. The interval 972-974 is PDZ-binding domain; sequence TRL.

Belongs to the transient receptor (TC 1.A.4) family. STrpC subfamily. TRPC4 sub-subfamily. Homotetramer. Heterotetramer with TRPC1 and/or TRPC5. Forms a heteromeric ion channel with TRPC1, with a 1:3 TRPC1:TRPC4 stoichiometry. Interacts with TRPC4AP. Isoform alpha but not isoform beta interacts with ITPR1, ITPR2 and ITPR3. Interacts with NHERF1. Interacts with MX1 and RNF24. Interacts (via CIRB domain) with SESTD1 (via the spectrin 1 repeat) and SPTBN5 (via C-terminus). Interacts with CDH5 and CTNNB1. Interacts (via protein 4.1-binding domain) with EPB41L2. Interacts with PLSCR1. As to expression, abundantly expressed in brain (hippocampal CA1 pyramidal neurons, dentate gyrus granule cells, and cerebral cortical neurons, and in the septal nuclei and the mitral layer of olfactory bulb). Lower levels are detected in other tissues.

It localises to the cell membrane. The enzyme catalyses Ca(2+)(in) = Ca(2+)(out). The catalysed reaction is Na(+)(in) = Na(+)(out). It carries out the reaction Li(+)(in) = Li(+)(out). It catalyses the reaction Cs(+)(in) = Cs(+)(out). With respect to regulation, may be operated by a phosphatidylinositol second messenger system activated by receptor tyrosine kinases or G-protein coupled receptors. May be activated by intracellular calcium store depletion. Functionally, forms a receptor-activated non-selective calcium permeant cation channel. Acts as a cell-cell contact-dependent endothelial calcium entry channel. Forms a homomeric ion channel or a heteromeric ion channel with TRPC1; the heteromeric ion channel has reduced calcium permeability compared to the homomeric channel. Also permeable to monovalent ions including sodium, lithium and cesium ions. This chain is Short transient receptor potential channel 4 (Trpc4), found in Mus musculus (Mouse).